Consider the following 637-residue polypeptide: Biosynthetic arginine decarboxylase (637 aa).

Lysine 101 is modified (N6-(pyridoxal phosphate)lysine). Substrate is bound at residue 286 to 296 (FDVGGGLAVDY).

Belongs to the Orn/Lys/Arg decarboxylase class-II family. SpeA subfamily. Mg(2+) is required as a cofactor. The cofactor is pyridoxal 5'-phosphate.

It catalyses the reaction L-arginine + H(+) = agmatine + CO2. Its pathway is amine and polyamine biosynthesis; agmatine biosynthesis; agmatine from L-arginine: step 1/1. Functionally, catalyzes the biosynthesis of agmatine from arginine. The polypeptide is Biosynthetic arginine decarboxylase (Shewanella halifaxensis (strain HAW-EB4)).